A 338-amino-acid chain; its full sequence is NADH-quinone oxidoreductase subunit H (338 aa).

8 consecutive transmembrane segments (helical) span residues 22–42, 96–116, 121–141, 161–181, 193–213, 249–269, 277–297, and 315–335; these read VVQA…MSFI, VAMA…ALGV, IGLL…LFGG, ISYE…AGSF, VWFI…GVAV, YVNV…GWLA, FVPP…MFVL, and WKIC…VILM.

This sequence belongs to the complex I subunit 1 family. As to quaternary structure, NDH-1 is composed of 14 different subunits. Subunits NuoA, H, J, K, L, M, N constitute the membrane sector of the complex.

It localises to the cell inner membrane. The enzyme catalyses a quinone + NADH + 5 H(+)(in) = a quinol + NAD(+) + 4 H(+)(out). Functionally, NDH-1 shuttles electrons from NADH, via FMN and iron-sulfur (Fe-S) centers, to quinones in the respiratory chain. The immediate electron acceptor for the enzyme in this species is believed to be ubiquinone. Couples the redox reaction to proton translocation (for every two electrons transferred, four hydrogen ions are translocated across the cytoplasmic membrane), and thus conserves the redox energy in a proton gradient. This subunit may bind ubiquinone. This is NADH-quinone oxidoreductase subunit H from Acinetobacter baumannii (strain ATCC 17978 / DSM 105126 / CIP 53.77 / LMG 1025 / NCDC KC755 / 5377).